Here is a 343-residue protein sequence, read N- to C-terminus: Glyceraldehyde-3-phosphate dehydrogenase (343 aa).

NAD(+) is bound by residues 13 to 14 (TI) and Gly-111. Residue 140–142 (SCN) participates in D-glyceraldehyde 3-phosphate binding. Cys-141 acts as the Nucleophile in catalysis. Arg-169 lines the NAD(+) pocket. 195 to 196 (HA) is a binding site for D-glyceraldehyde 3-phosphate. Gln-303 lines the NAD(+) pocket.

The protein belongs to the glyceraldehyde-3-phosphate dehydrogenase family. In terms of assembly, homotetramer.

It localises to the cytoplasm. It carries out the reaction D-glyceraldehyde 3-phosphate + phosphate + NADP(+) = (2R)-3-phospho-glyceroyl phosphate + NADPH + H(+). The enzyme catalyses D-glyceraldehyde 3-phosphate + phosphate + NAD(+) = (2R)-3-phospho-glyceroyl phosphate + NADH + H(+). The protein operates within carbohydrate degradation; glycolysis; pyruvate from D-glyceraldehyde 3-phosphate: step 1/5. The chain is Glyceraldehyde-3-phosphate dehydrogenase from Sulfurisphaera tokodaii (strain DSM 16993 / JCM 10545 / NBRC 100140 / 7) (Sulfolobus tokodaii).